A 740-amino-acid polypeptide reads, in one-letter code: Arf-GAP with coiled-coil, ANK repeat and PH domain-containing protein 1 (740 aa).

Residues 1 to 226 (MTVKLDFEEC…RKELGTQLHN (226 aa)) enclose the BAR domain. Residues 1-382 (MTVKLDFEEC…RGPGQVSGYH (382 aa)) form a required for formation of endosomal tubules when overexpressed with PIP5K1C region. A PH domain is found at 265-360 (GLVMEGHLFK…WVSAVQSSIA (96 aa)). Positions 405–527 (GQVAAQVQSV…KFLTKLPEIR (123 aa)) constitute an Arf-GAP domain. A required for interaction with GULP1 region spans residues 405–740 (GQVAAQVQSV…SRRSHDLHTL (336 aa)). Residues 420 to 443 (CCDCREPAPEWASINLGVTLCIQC) form a C4-type zinc finger. A 3'-nitrotyrosine modification is found at Tyr485. The disordered stretch occupies residues 525–562 (EIRGRRGGRGPPRGHPPVPPKPPIRPHSGIVRSKSECP). Residues 525–566 (EIRGRRGGRGPPRGHPPVPPKPPIRPHSGIVRSKSECPSDDM) form a prevents interaction with ITGB1 when S-554 is not phosphorylated region. Positions 537-549 (RGHPPVPPKPPIR) are enriched in pro residues. ANK repeat units follow at residues 606–635 (GNAT…NVNQ), 639–668 (AGRG…DLGA), and 672–702 (EGRD…EAEA).

Banana-shaped homodimer laterally assembling into tetramers, the tetramers further pack helically onto the membrane. Interacts with GTP-bound ARF6. Interacts with third cytoplasmic loop of SLC2A4/GLUT4. Interacts with CLTC. Interacts with GULP1. Forms a complex with GDP-bound ARF6 and GULP1. Interacts with ITGB1; required for ITGB1 recycling.

It localises to the recycling endosome membrane. Its activity is regulated as follows. GAP activity stimulated by phosphatidylinositol 4,5-bisphosphate (PIP2) and phosphatidic acid. Its function is as follows. GTPase-activating protein (GAP) for ADP ribosylation factor 6 (ARF6) required for clathrin-dependent export of proteins from recycling endosomes to trans-Golgi network and cell surface. Required for regulated export of ITGB1 from recycling endosomes to the cell surface and ITGB1-dependent cell migration. This chain is Arf-GAP with coiled-coil, ANK repeat and PH domain-containing protein 1 (Acap1), found in Mus musculus (Mouse).